Consider the following 546-residue polypeptide: Probable E3 ubiquitin-protein ligase NGR_a03640 (546 aa).

Positions 1–70 are disordered; that stretch reads MNVQRPGLAV…RPWEGRPQEA (70 aa). An interaction with target proteins region spans residues 1 to 248; the sequence is MNVQRPGLAV…YAGPQIFLPM (248 aa). Low complexity predominate over residues 22 to 48; the sequence is SEPGSPAAAARWVEASTEAEASAASSS. Residues 58-67 are compositionally biased toward basic and acidic residues; the sequence is AEERPWEGRP. 5 LRR repeats span residues 104–125, 126–144, 145–166, 167–186, and 187–208; these read GLRR…LPGT, LLEL…DLPA, GLQR…LPAA, LEWL…MIPP, and ELIW…LLTQ. Residues 249 to 256 are linker; that stretch reads GPVELARR. One can recognise an NEL domain in the interval 257–546; that stretch reads PLHEVVADWL…KVLRGRGLEL (290 aa). Positions 257 to 546 are E3 ubiquitin-protein ligase catalytic domain; that stretch reads PLHEVVADWL…KVLRGRGLEL (290 aa). Catalysis depends on C338, which acts as the Glycyl thioester intermediate.

Belongs to the LRR-containing bacterial E3 ligase family. Post-translationally, ubiquitinated in the presence of host E1 ubiquitin-activating enzyme, E2 ubiquitin-conjugating enzyme and ubiquitin.

It is found in the secreted. It localises to the host cytoplasm. Functionally, effector proteins function to alter host cell physiology and promote bacterial survival in host tissues. This protein is an E3 ubiquitin ligase that interferes with host's ubiquitination pathway. This is Probable E3 ubiquitin-protein ligase NGR_a03640 from Sinorhizobium fredii (strain NBRC 101917 / NGR234).